The sequence spans 213 residues: ER lumen protein-retaining receptor erd-2.1 (213 aa).

Residues 1 to 2 lie on the Lumenal side of the membrane; the sequence is MN. Residues 3-21 form a helical membrane-spanning segment; the sequence is LFRFTADVAHAIAIVVLLL. Residues 22–35 are Cytoplasmic-facing; the sequence is KIWKSRSCEGISGR. The chain crosses the membrane as a helical span at residues 36–53; it reads SQLLFALVFVTRYLDLFT. Topologically, residues 54–61 are lumenal; the sequence is NFFSFYNT. Residues 62–80 traverse the membrane as a helical segment; that stretch reads AMKIFYLVASFGTVYLMWA. The Cytoplasmic segment spans residues 81–96; that stretch reads KFKATYDRNNDSFRIE. The helical transmembrane segment at 97 to 110 threads the bilayer; sequence FLVIPSMILALLIN. Over 111 to 117 the chain is Lumenal; that stretch reads HEFIFME. A helical transmembrane segment spans residues 118-137; the sequence is VMWTFSIYLEAVAIMPQLFM. Residues 138–149 lie on the Cytoplasmic side of the membrane; sequence LSRTGNAETITA. Residues 150–168 traverse the membrane as a helical segment; it reads HYLFALGSYRFLYILNWVY. Residues 169-178 lie on the Lumenal side of the membrane; that stretch reads RYYTESFFDP. A helical membrane pass occupies residues 179 to 199; the sequence is ISVVAGIVQTVLYADFFYLYI. Topologically, residues 200-213 are cytoplasmic; it reads TRVIQSNRQFEMSA.

This sequence belongs to the ERD2 family.

Its subcellular location is the endoplasmic reticulum membrane. In terms of biological role, required for the retention of luminal endoplasmic reticulum proteins. Determines the specificity of the luminal ER protein retention system. Also required for normal vesicular traffic through the Golgi. This is ER lumen protein-retaining receptor erd-2.1 from Caenorhabditis elegans.